A 116-amino-acid chain; its full sequence is Ribosome-binding factor A (116 aa).

This sequence belongs to the RbfA family. As to quaternary structure, monomer. Binds 30S ribosomal subunits, but not 50S ribosomal subunits or 70S ribosomes.

Its subcellular location is the cytoplasm. Functionally, one of several proteins that assist in the late maturation steps of the functional core of the 30S ribosomal subunit. Associates with free 30S ribosomal subunits (but not with 30S subunits that are part of 70S ribosomes or polysomes). Required for efficient processing of 16S rRNA. May interact with the 5'-terminal helix region of 16S rRNA. This is Ribosome-binding factor A from Buchnera aphidicola subsp. Cinara cedri (strain Cc).